The primary structure comprises 359 residues: Type-1 angiotensin II receptor (359 aa).

The Extracellular segment spans residues 1–25; the sequence is MILNSSTEDGIKRIQDDCPKAGRHN. N-linked (GlcNAc...) asparagine glycosylation occurs at N4. Angiotensin II-binding residues include Q15 and D17. Intrachain disulfides connect C18/C274 and C101/C180. Residues 26–55 traverse the membrane as a helical segment; the sequence is YIFIMIPTLYSIIFVVGIFGNSLVVIVIYF. Residues 56–61 lie on the Cytoplasmic side of the membrane; the sequence is YMKLKT. The helical transmembrane segment at 62–89 threads the bilayer; the sequence is VASVFLLNLALADLCFLLTLPLWAVYTA. Residues 90–98 lie on the Extracellular side of the membrane; the sequence is MEYRWPFGN. The helical transmembrane segment at 99–125 threads the bilayer; it reads YLCKIASASVSFNLYASVFLLTCLSID. The Cytoplasmic portion of the chain corresponds to 126-141; it reads RYLAIVHPMKSRLRRT. A helical transmembrane segment spans residues 142 to 165; it reads MLVAKVTCIIIWLLAGLASLPTII. Residues 166 to 190 lie on the Extracellular side of the membrane; sequence HRNVFFIENTNITVCAFHYESQNST. R167 contributes to the angiotensin II binding site. N176 carries an N-linked (GlcNAc...) asparagine glycan. Residues F182, H183, and Y184 each contribute to the angiotensin II site. N188 carries an N-linked (GlcNAc...) asparagine glycan. Residues 191 to 216 traverse the membrane as a helical segment; the sequence is LPVGLGLTKNILGFLFPFLIILTSYT. K199 is an angiotensin II binding site. Residues 217-239 lie on the Cytoplasmic side of the membrane; that stretch reads LIWKTLKKAYEIQKNKPRKDDIF. A helical membrane pass occupies residues 240-268; that stretch reads KIILAIVLFFFFSWVPHQIFTFMDVLIQL. Residues 269-278 lie on the Extracellular side of the membrane; the sequence is GLIRDCKIED. The helical transmembrane segment at 279–304 threads the bilayer; it reads IVDTAMPITICLAYFNNCLNPLFYGF. Over 305 to 359 the chain is Cytoplasmic; sequence LGKKFKKYFLQLLKYIPPKAKSHSNLSTKMSTLSYRPSENGNSSTKKPAPCIEVE. The span at 336 to 350 shows a compositional bias: polar residues; that stretch reads TLSYRPSENGNSSTK. The interval 336-359 is disordered; it reads TLSYRPSENGNSSTKKPAPCIEVE. C355 carries S-palmitoyl cysteine lipidation.

It belongs to the G-protein coupled receptor 1 family. In terms of assembly, interacts with MAS1. Interacts with ARRB1. Interacts with FLNA (via filamin repeat 21); increases PKA-mediated phosphorylation of FLNA. In terms of processing, C-terminal Ser or Thr residues may be phosphorylated. Adrenal medulla, cortex and kidney.

The protein resides in the cell membrane. In terms of biological role, receptor for angiotensin II, a vasoconstricting peptide, which acts as a key regulator of blood pressure and sodium retention by the kidney. The activated receptor in turn couples to G-alpha proteins G(q) (GNAQ, GNA11, GNA14 or GNA15) and thus activates phospholipase C and increases the cytosolic Ca(2+) concentrations, which in turn triggers cellular responses such as stimulation of protein kinase C. The protein is Type-1 angiotensin II receptor (AGTR1) of Bos taurus (Bovine).